A 43-amino-acid chain; its full sequence is Photosystem I reaction center subunit IX (43 aa).

A helical transmembrane segment spans residues Tyr-7–Ile-27.

This sequence belongs to the PsaJ family.

The protein resides in the plastid. Its subcellular location is the chloroplast thylakoid membrane. May help in the organization of the PsaE and PsaF subunits. The sequence is that of Photosystem I reaction center subunit IX from Oenothera argillicola (Appalachian evening primrose).